The chain runs to 787 residues: Probable phosphoketolase (787 aa).

Belongs to the XFP family. Requires thiamine diphosphate as cofactor.

In Pediococcus pentosaceus (strain ATCC 25745 / CCUG 21536 / LMG 10740 / 183-1w), this protein is Probable phosphoketolase.